The sequence spans 244 residues: Neurogenin-1 (244 aa).

2 disordered regions span residues 1 to 27 (MPAP…SSFL) and 39 to 82 (LAST…ARVR). Residues 10–27 (SDLDCSSSNSSSDLSSFL) are compositionally biased toward low complexity. Positions 93-145 (SRRVKANDRERNRMHNLNAALDALRSVLPSFPDDTKLTKIETLRFAYNYIWAL) constitute a bHLH domain.

Efficient DNA binding requires dimerization with another bHLH protein. Expression restricted to the embryonic nervous system.

Its subcellular location is the nucleus. Its function is as follows. Acts as a transcriptional regulator. Involved in the initiation of neuronal differentiation. Activates transcription by binding to the E box (5'-CANNTG-3'). Associates with chromatin to enhancer regulatory elements in genes encoding key transcriptional regulators of neurogenesis. This Mus musculus (Mouse) protein is Neurogenin-1 (Neurog1).